We begin with the raw amino-acid sequence, 299 residues long: 4-hydroxy-tetrahydrodipicolinate synthase (299 aa).

Residue Thr-51 participates in pyruvate binding. The active-site Proton donor/acceptor is the Tyr-139. The active-site Schiff-base intermediate with substrate is Lys-167. Ile-209 contributes to the pyruvate binding site.

The protein belongs to the DapA family. Homotetramer; dimer of dimers.

Its subcellular location is the cytoplasm. It carries out the reaction L-aspartate 4-semialdehyde + pyruvate = (2S,4S)-4-hydroxy-2,3,4,5-tetrahydrodipicolinate + H2O + H(+). It participates in amino-acid biosynthesis; L-lysine biosynthesis via DAP pathway; (S)-tetrahydrodipicolinate from L-aspartate: step 3/4. Catalyzes the condensation of (S)-aspartate-beta-semialdehyde [(S)-ASA] and pyruvate to 4-hydroxy-tetrahydrodipicolinate (HTPA). The sequence is that of 4-hydroxy-tetrahydrodipicolinate synthase from Methylobacterium radiotolerans (strain ATCC 27329 / DSM 1819 / JCM 2831 / NBRC 15690 / NCIMB 10815 / 0-1).